Consider the following 416-residue polypeptide: Enterobactin exporter EntS (416 aa).

The Cytoplasmic portion of the chain corresponds to 1–21; sequence MNRQSWLLNLSLLKTHPAFRA. Residues 22–42 traverse the membrane as a helical segment; that stretch reads VFLARFISIVSLGLLGVAVPV. The Periplasmic portion of the chain corresponds to 43–55; sequence QIQMMTHSTWQVG. Residues 56–76 form a helical membrane-spanning segment; sequence LSVTLTGSAMFVGLMVGGVLA. Topologically, residues 77-83 are cytoplasmic; that stretch reads DRYERKK. A helical transmembrane segment spans residues 84 to 104; that stretch reads VILLARGTCGIGFIGLCLNAL. Over 105 to 109 the chain is Periplasmic; that stretch reads LPEPS. A helical transmembrane segment spans residues 110–130; the sequence is LLAIYLLGLWDGFFASLGVTA. Topologically, residues 131–156 are cytoplasmic; that stretch reads LLAATPALVGRENLMQAGAITMLTVR. The helical transmembrane segment at 157 to 177 threads the bilayer; sequence LGSVISPMLGGVLLATGGVAW. Asn-178 is a topological domain (periplasmic). A helical membrane pass occupies residues 179–199; it reads YGLAAAGTFITLLPLLSLPAL. Over 200-218 the chain is Cytoplasmic; it reads PPPPQPREHPLKSLLAAFR. The helical transmembrane segment at 219–239 threads the bilayer; sequence FLLSSPLIGGIALLGGLLTMA. Topologically, residues 240–256 are periplasmic; that stretch reads SAVRVLYPALAINWHMS. The chain crosses the membrane as a helical span at residues 257–277; the sequence is AAQIGLLYAAIPLGAAVGALT. The Cytoplasmic portion of the chain corresponds to 278 to 287; that stretch reads SGQLAHSVRP. Residues 288–307 traverse the membrane as a helical segment; the sequence is GLLMLVSTVGSFLAIGVFGL. At 308-313 the chain is on the periplasmic side; it reads MPVWLL. The chain crosses the membrane as a helical span at residues 314–336; the sequence is GVICLALFGWLSAISSLLQYTLL. Over 337-356 the chain is Cytoplasmic; the sequence is QTQTPEAMLGRINGLWTAQN. The chain crosses the membrane as a helical span at residues 357 to 377; that stretch reads VTGDAIGAALLGGLGAMMTPV. A topological domain (periplasmic) is located at residue Ala-378. A helical transmembrane segment spans residues 379 to 399; the sequence is SASVSGFGLVIVGLLLMLLLG. Over 400–416 the chain is Cytoplasmic; the sequence is ELRRFRQPPPVPDGAPL.

This sequence belongs to the major facilitator superfamily. EntS (TC 2.A.1.38) family.

It localises to the cell inner membrane. Its function is as follows. Component of an export pathway for enterobactin. This is Enterobactin exporter EntS from Citrobacter koseri (strain ATCC BAA-895 / CDC 4225-83 / SGSC4696).